The chain runs to 283 residues: Glutamate racemase (283 aa).

Residues 28 to 29 and 60 to 61 contribute to the substrate site; these read DS and YG. The active-site Proton donor/acceptor is the cysteine 92. A substrate-binding site is contributed by 93–94; that stretch reads NT. The Proton donor/acceptor role is filled by cysteine 204. 205-206 is a substrate binding site; sequence TH.

The protein belongs to the aspartate/glutamate racemases family.

The enzyme catalyses L-glutamate = D-glutamate. Its pathway is cell wall biogenesis; peptidoglycan biosynthesis. In terms of biological role, provides the (R)-glutamate required for cell wall biosynthesis. In Klebsiella pneumoniae (strain 342), this protein is Glutamate racemase.